The sequence spans 324 residues: NADH-ubiquinone oxidoreductase chain 1 (324 aa).

Helical transmembrane passes span 9 to 29 (LINP…LTLI), 43 to 63 (PNIV…KLFI), 77 to 97 (FLAT…PLPL), 106 to 126 (LGLL…LGSG), 146 to 166 (ISYE…AGGF), 177 to 197 (TIWL…STLA), 228 to 248 (LFFL…VILF), 259 to 279 (QISS…FLWI), and 299 to 319 (FLPL…ATTS).

It belongs to the complex I subunit 1 family.

Its subcellular location is the mitochondrion inner membrane. It catalyses the reaction a ubiquinone + NADH + 5 H(+)(in) = a ubiquinol + NAD(+) + 4 H(+)(out). In terms of biological role, core subunit of the mitochondrial membrane respiratory chain NADH dehydrogenase (Complex I) that is believed to belong to the minimal assembly required for catalysis. Complex I functions in the transfer of electrons from NADH to the respiratory chain. The immediate electron acceptor for the enzyme is believed to be ubiquinone. The sequence is that of NADH-ubiquinone oxidoreductase chain 1 (MT-ND1) from Scyliorhinus canicula (Small-spotted catshark).